Here is a 161-residue protein sequence, read N- to C-terminus: Large ribosomal subunit protein uL30m (161 aa).

The N-terminal 34 residues, 1 to 34 (MAGILRSIVQRPPGRLQTATKGVEPLVCVDWIRH), are a transit peptide targeting the mitochondrion.

Belongs to the universal ribosomal protein uL30 family. As to quaternary structure, component of the mitochondrial ribosome large subunit (39S) which comprises a 16S rRNA and about 50 distinct proteins.

The protein localises to the mitochondrion. This is Large ribosomal subunit protein uL30m (MRPL30) from Bos taurus (Bovine).